Consider the following 104-residue polypeptide: Large ribosomal subunit protein bL21 (104 aa).

This sequence belongs to the bacterial ribosomal protein bL21 family. In terms of assembly, part of the 50S ribosomal subunit. Contacts protein L20.

Functionally, this protein binds to 23S rRNA in the presence of protein L20. The polypeptide is Large ribosomal subunit protein bL21 (Rhodopirellula baltica (strain DSM 10527 / NCIMB 13988 / SH1)).